The sequence spans 198 residues: Inner membrane-spanning protein YciB (198 aa).

5 consecutive transmembrane segments (helical) span residues 36-56 (IFSA…ILYI), 67-87 (LTLV…SETF), 90-110 (WKAP…HFIG), 133-153 (LNIA…YVAF), and 162-182 (FKVF…GIYL).

Belongs to the YciB family.

It localises to the cell inner membrane. Its function is as follows. Plays a role in cell envelope biogenesis, maintenance of cell envelope integrity and membrane homeostasis. This Pseudomonas syringae pv. tomato (strain ATCC BAA-871 / DC3000) protein is Inner membrane-spanning protein YciB.